Consider the following 100-residue polypeptide: Biogenesis of lysosome-related organelles complex 1 subunit CNL1 (100 aa).

Residues 25-46 (SDRVKSLELEATRLVQRQNELV) adopt a coiled-coil conformation.

The protein belongs to the BLOC1S4 family. In terms of assembly, component of the biogenesis of lysosome-related organelles complex-1 (BLOC-1).

The protein resides in the cytoplasm. Component of the biogenesis of lysosome-related organelles complex-1 (BLOC-1), a complex that is involved in endosomal cargo sorting. The chain is Biogenesis of lysosome-related organelles complex 1 subunit CNL1 (CLN1) from Candida glabrata (strain ATCC 2001 / BCRC 20586 / JCM 3761 / NBRC 0622 / NRRL Y-65 / CBS 138) (Yeast).